The sequence spans 435 residues: Cyclic GMP-AMP synthase-like receptor (435 aa).

ATP is bound by residues serine 70 and 82 to 84 (EFD). Residues glutamate 82, aspartate 84, and aspartate 209 each contribute to the Mg(2+) site. Position 209 (aspartate 209) interacts with GTP. ATP is bound by residues lysine 286 and 300–304 (SYYVK). Leucine 311, aspartate 312, and aspartate 317 together coordinate Mn(2+).

It belongs to the mab-21 family. It depends on Mg(2+) as a cofactor. Mn(2+) is required as a cofactor.

The catalysed reaction is GTP + ATP = 2',3'-cGAMP + 2 diphosphate. It catalyses the reaction GTP + ATP = pppGp(2'-5')A + diphosphate. It carries out the reaction pppGp(2'-5')A = 2',3'-cGAMP + diphosphate. Its function is as follows. Nucleotidyltransferase that catalyzes the formation of cyclic GMP-AMP (2',3'-cGAMP) from ATP and GTP and plays a key role in innate immunity. Directly binds some unknown ligand, activating the nucleotidyltransferase activity, leading to synthesis of 2',3'-cGAMP, a second messenger that binds to and activates Sting, thereby triggering the immune response via activation of the NF-kappa-B transcription factor. In Ctenocephalides felis (Cat flea), this protein is Cyclic GMP-AMP synthase-like receptor.